A 184-amino-acid chain; its full sequence is Cbp/p300-interacting transactivator 4 (184 aa).

Positions 18 to 28 (PSAAAAHGPHA) are enriched in low complexity. Disordered regions lie at residues 18–67 (PSAA…YGAF) and 94–128 (TPYPGRAAAPPNAPGGPPGPQPAPSAAAPPPPAHA). The segment covering 104 to 126 (PNAPGGPPGPQPAPSAAAPPPPA) has biased composition (pro residues).

It belongs to the CITED family. In terms of assembly, interacts via its C-terminal region with the CH1 domain of CREBBP and EP300. Interacts with all TFAP2/AP-2 isoforms. In terms of tissue distribution, expressed in most tissues examined with highest levels of expression in heart, liver, skeletal muscle and pancreas. Also expressed in bladder cell line ECV-304 and in various breast cancer cell lines. Also detected in both in situ and invasive breast tumors where its expression is down-regulated and mostly restricted to the cytoplasm of malignant epithelium. Down-regulation of expression is associated with elevated levels of HIF1A and increased tumor growth and angiogenesis.

It localises to the nucleus. The protein resides in the cytoplasm. Acts as a transcriptional coactivator for TFAP2/AP-2. Enhances estrogen-dependent transactivation mediated by estrogen receptors. May function as an inhibitor of transactivation by HIF1A by disrupting HIF1A interaction with CREBBP. May be involved in regulation of gene expression during development and differentiation of blood cells, endothelial cells and mammary epithelial cells. This Homo sapiens (Human) protein is Cbp/p300-interacting transactivator 4.